Reading from the N-terminus, the 590-residue chain is Probable metalloendopeptidase G1-type (590 aa).

Histidine 41 contributes to the Zn(2+) binding site. Glutamate 44 is an active-site residue. Histidine 45 is a Zn(2+) binding site.

The protein belongs to the peptidase M44 family. Zn(2+) is required as a cofactor.

Its function is as follows. Seems to be involved in viral proteins maturation by cleavage at Ala-Gly-|-Xaa motifs. This chain is Probable metalloendopeptidase G1-type, found in Oryctolagus cuniculus (Rabbit).